Here is a 206-residue protein sequence, read N- to C-terminus: Large ribosomal subunit protein uL4 (206 aa).

The protein belongs to the universal ribosomal protein uL4 family. As to quaternary structure, part of the 50S ribosomal subunit.

In terms of biological role, one of the primary rRNA binding proteins, this protein initially binds near the 5'-end of the 23S rRNA. It is important during the early stages of 50S assembly. It makes multiple contacts with different domains of the 23S rRNA in the assembled 50S subunit and ribosome. Its function is as follows. Forms part of the polypeptide exit tunnel. The sequence is that of Large ribosomal subunit protein uL4 from Rhodopseudomonas palustris (strain HaA2).